Reading from the N-terminus, the 303-residue chain is Probable 5-dehydro-4-deoxyglucarate dehydratase (303 aa).

Belongs to the DapA family.

It carries out the reaction 5-dehydro-4-deoxy-D-glucarate + H(+) = 2,5-dioxopentanoate + CO2 + H2O. It functions in the pathway carbohydrate acid metabolism; D-glucarate degradation; 2,5-dioxopentanoate from D-glucarate: step 2/2. The protein is Probable 5-dehydro-4-deoxyglucarate dehydratase of Pseudomonas putida (strain ATCC 700007 / DSM 6899 / JCM 31910 / BCRC 17059 / LMG 24140 / F1).